Reading from the N-terminus, the 148-residue chain is MNFSFAPLFLVTLILLGVVSNNNSITISATILLLMQQTALIQFVPLVEKHGLNLGIILLTIGVLSPLVSGKAQVPPVAEFLNFKMISAVFIGIFVAWLAGRGVPLMGQQPVLITGLLIGTVIGVAFMGGIPVGPLIAAGILSFVVGKG.

Transmembrane regions (helical) follow at residues 13 to 35, 50 to 70, 80 to 100, and 121 to 141; these read LILLGVVSNNNSITISATILLLM, HGLNLGIILLTIGVLSPLVSG, FLNFKMISAVFIGIFVAWLAG, and VIGVAFMGGIPVGPLIAAGIL.

Belongs to the UPF0756 family.

It localises to the cell membrane. This chain is UPF0756 membrane protein NMA2160, found in Neisseria meningitidis serogroup A / serotype 4A (strain DSM 15465 / Z2491).